The following is a 414-amino-acid chain: MQPASPVSGDAGPVAEAVPPRGAPQVLVRRRSVPFSPDSPLAPGSRGGGERRSTFREDVSHAAAETYLVTRLAFILLRYLGVGYRWISQLAALIIYAILLMPGFIRVGYYYFFSRQVLRSVIYGDQPRNRLDLYIPRDPKKPSPVVAFVTGGAWIIGYKAWGALLGRRLAERGIIVACIDYRNFPQGTISDMVSDASDGISFVCETVGAYGGDPNQIYLMGQSAGAHIAACALLEQAAKESRGEQISWSVTQIKAYFGLSGGYNIENLVDHFHERGLYRSIFLSIMEGKKSLPHFSPETVAKKLCPETIALLPQIVLLHGTDDYSIPFSASETFAGVLKQAGAKAKLLLYEGKTHTDVFLQDPLRGGRDKLVEDVISVIHADDADAREKDALAPIPGRLVSEWQIKLAHRISPF.

Residues 1–54 (MQPASPVSGDAGPVAEAVPPRGAPQVLVRRRSVPFSPDSPLAPGSRGGGERRST) form a disordered region. The next 2 membrane-spanning stretches (helical) occupy residues 90 to 110 (LAALIIYAILLMPGFIRVGYY) and 145 to 165 (VVAFVTGGAWIIGYKAWGALL). Residues 151-153 (GGA) and 222-224 (QSA) each bind substrate. Residues S223, D323, and H355 contribute to the active site.

The protein belongs to the AB hydrolase superfamily. Isoprenylcysteine methylesterase family.

The protein localises to the endoplasmic reticulum membrane. It localises to the golgi apparatus membrane. The enzyme catalyses [protein]-C-terminal S-[(2E,6E)-farnesyl]-L-cysteine methyl ester + H2O = [protein]-C-terminal S-[(2E,6E)-farnesyl]-L-cysteine + methanol + H(+). Catalyzes the demethylation of isoprenylcysteine methylesters. This Oryza sativa subsp. japonica (Rice) protein is Probable isoprenylcysteine alpha-carbonyl methylesterase ICME (IMCE).